The sequence spans 370 residues: Chorismate synthase (370 aa).

The NADP(+) site is built by Arg-48 and Arg-54. FMN-binding positions include 130–132 (RSS), 242–243 (NA), Gly-287, 302–306 (KPTSS), and Arg-328.

The protein belongs to the chorismate synthase family. In terms of assembly, homotetramer. The cofactor is FMNH2.

It carries out the reaction 5-O-(1-carboxyvinyl)-3-phosphoshikimate = chorismate + phosphate. It functions in the pathway metabolic intermediate biosynthesis; chorismate biosynthesis; chorismate from D-erythrose 4-phosphate and phosphoenolpyruvate: step 7/7. Functionally, catalyzes the anti-1,4-elimination of the C-3 phosphate and the C-6 proR hydrogen from 5-enolpyruvylshikimate-3-phosphate (EPSP) to yield chorismate, which is the branch point compound that serves as the starting substrate for the three terminal pathways of aromatic amino acid biosynthesis. This reaction introduces a second double bond into the aromatic ring system. This Xanthobacter autotrophicus (strain ATCC BAA-1158 / Py2) protein is Chorismate synthase.